The chain runs to 600 residues: ATP-dependent lipid A-core flippase (600 aa).

Transmembrane regions (helical) follow at residues 28–48 (IMAVLGLITYGAVDAAFIAFI), 80–100 (IMLMAPIAVILMFSLRGVANF), 182–202 (WKLSLCILVIGPIMGVVISVV), 267–287 (ISQPLIMVIGSFALAFVLYAA), and 295–315 (DLTAGTFAAILGAMLAMLQPI). Positions 28–327 (IMAVLGLITY…LTRVNAEFQR (300 aa)) constitute an ABC transmembrane type-1 domain. Residues 359–596 (LAFDNVTFAY…AGIYANLYQM (238 aa)) enclose the ABC transporter domain. 393-400 (GRSGSGKS) contacts ATP.

It belongs to the ABC transporter superfamily. Lipid exporter (TC 3.A.1.106) family. As to quaternary structure, homodimer.

It localises to the cell inner membrane. It catalyses the reaction ATP + H2O + lipid A-core oligosaccharideSide 1 = ADP + phosphate + lipid A-core oligosaccharideSide 2.. Involved in lipopolysaccharide (LPS) biosynthesis. Translocates lipid A-core from the inner to the outer leaflet of the inner membrane. Transmembrane domains (TMD) form a pore in the inner membrane and the ATP-binding domain (NBD) is responsible for energy generation. The polypeptide is ATP-dependent lipid A-core flippase (Shewanella frigidimarina (strain NCIMB 400)).